The chain runs to 94 residues: Putative pterin-4-alpha-carbinolamine dehydratase (94 aa).

Belongs to the pterin-4-alpha-carbinolamine dehydratase family.

It carries out the reaction (4aS,6R)-4a-hydroxy-L-erythro-5,6,7,8-tetrahydrobiopterin = (6R)-L-erythro-6,7-dihydrobiopterin + H2O. The sequence is that of Putative pterin-4-alpha-carbinolamine dehydratase from Mycobacterium sp. (strain KMS).